Here is a 77-residue protein sequence, read N- to C-terminus: Conotoxin VnMEKL-0111 (77 aa).

Positions 1-19 (MEKLTILLLVAAVLMSTQA) are cleaved as a signal peptide. The propeptide occupies 20 to 46 (LIQHDGEKSQKAKMKFLTARTLSAKTR). 3 cysteine pairs are disulfide-bonded: Cys-50–Cys-66, Cys-57–Cys-71, and Cys-65–Cys-75.

Belongs to the conotoxin O2 superfamily. As to expression, expressed by the venom duct.

The protein localises to the secreted. The protein is Conotoxin VnMEKL-0111 of Conus ventricosus (Mediterranean cone).